The chain runs to 738 residues: Protein Aster-B (738 aa).

Positions 1-81 are disordered; it reads MKGFKLSCTA…SGGKNSKKSQ (81 aa). A compositionally biased stretch (polar residues) spans 8–19; that stretch reads CTASNSNRSTPA. 2 positions are modified to phosphoserine: S28 and S30. Basic and acidic residues predominate over residues 41 to 51; sequence MVEKGSDHSSD. The span at 59 to 70 shows a compositional bias: low complexity; it reads QGVQRSCSSQSG. In terms of domain architecture, GRAM spans 96 to 163; it reads EDFRKLFKQL…KDICSMTKEK (68 aa). Positions 254-299 are disordered; it reads EENEVNDSSSKSSIETKPDASPQLPKKSITNSTLTSTGSSEAPVSF. Residues 259–268 are compositionally biased toward polar residues; it reads NDSSSKSSIE. The residue at position 274 (S274) is a Phosphoserine. The segment covering 281–295 has biased composition (polar residues); sequence SITNSTLTSTGSSEA. Positions 372–543 constitute a VASt domain; it reads SGRQYVNEVF…ELTKTESTYL (172 aa). Y389 is subject to Phosphotyrosine. Residues S550 and S581 each carry the phosphoserine modification. Phosphothreonine occurs at positions 584, 585, and 587. A helical membrane pass occupies residues 623-643; that stretch reads LLLVISCVICFSLVLLVVLNM.

As to expression, highly expressed in the adrenal gland (at protein level) and brain. Also found in the kidney, testis and macrophages.

The protein localises to the endoplasmic reticulum membrane. It is found in the cell membrane. Cholesterol transporter that mediates non-vesicular transport of cholesterol from the plasma membrane (PM) to the endoplasmic reticulum (ER). Contains unique domains for binding cholesterol and the PM, thereby serving as a molecular bridge for the transfer of cholesterol from the PM to the ER. Plays a crucial role in cholesterol homeostasis in the adrenal gland and has the unique ability to localize to the PM based on the level of membrane cholesterol. In lipid-poor conditions localizes to the ER membrane and in response to excess cholesterol in the PM is recruited to the endoplasmic reticulum-plasma membrane contact sites (EPCS) which is mediated by the GRAM domain. At the EPCS, the sterol-binding VASt/ASTER domain binds to the cholesterol in the PM and facilitates its transfer from the PM to ER. The polypeptide is Protein Aster-B (Gramd1b) (Mus musculus (Mouse)).